The primary structure comprises 377 residues: Glutamate 5-kinase (377 aa).

ATP is bound at residue Lys-22. The substrate site is built by Ser-62, Asp-149, and Asn-161. Residues 181–182 (TD) and 223–229 (TGGMVTK) each bind ATP. The PUA domain maps to 285–363 (RGTIVVDAGA…AQLKRFLGPQ (79 aa)).

This sequence belongs to the glutamate 5-kinase family.

The protein localises to the cytoplasm. It carries out the reaction L-glutamate + ATP = L-glutamyl 5-phosphate + ADP. It participates in amino-acid biosynthesis; L-proline biosynthesis; L-glutamate 5-semialdehyde from L-glutamate: step 1/2. Its function is as follows. Catalyzes the transfer of a phosphate group to glutamate to form L-glutamate 5-phosphate. In Bifidobacterium longum (strain DJO10A), this protein is Glutamate 5-kinase.